Reading from the N-terminus, the 444-residue chain is Methylenetetrahydrofolate--tRNA-(uracil-5-)-methyltransferase TrmFO (444 aa).

FAD is bound at residue 10–15; that stretch reads GAGLAG.

Belongs to the MnmG family. TrmFO subfamily. FAD serves as cofactor.

It is found in the cytoplasm. The enzyme catalyses uridine(54) in tRNA + (6R)-5,10-methylene-5,6,7,8-tetrahydrofolate + NADH + H(+) = 5-methyluridine(54) in tRNA + (6S)-5,6,7,8-tetrahydrofolate + NAD(+). It catalyses the reaction uridine(54) in tRNA + (6R)-5,10-methylene-5,6,7,8-tetrahydrofolate + NADPH + H(+) = 5-methyluridine(54) in tRNA + (6S)-5,6,7,8-tetrahydrofolate + NADP(+). Functionally, catalyzes the folate-dependent formation of 5-methyl-uridine at position 54 (M-5-U54) in all tRNAs. This Streptococcus equi subsp. equi (strain 4047) protein is Methylenetetrahydrofolate--tRNA-(uracil-5-)-methyltransferase TrmFO.